The chain runs to 120 residues: NAD(P)H-quinone oxidoreductase subunit 3, chloroplastic (120 aa).

Transmembrane regions (helical) follow at residues phenylalanine 10–isoleucine 30, methionine 64–methionine 84, and leucine 89–isoleucine 109.

The protein belongs to the complex I subunit 3 family. In terms of assembly, NDH is composed of at least 16 different subunits, 5 of which are encoded in the nucleus.

It localises to the plastid. The protein resides in the chloroplast thylakoid membrane. The enzyme catalyses a plastoquinone + NADH + (n+1) H(+)(in) = a plastoquinol + NAD(+) + n H(+)(out). It catalyses the reaction a plastoquinone + NADPH + (n+1) H(+)(in) = a plastoquinol + NADP(+) + n H(+)(out). Functionally, NDH shuttles electrons from NAD(P)H:plastoquinone, via FMN and iron-sulfur (Fe-S) centers, to quinones in the photosynthetic chain and possibly in a chloroplast respiratory chain. The immediate electron acceptor for the enzyme in this species is believed to be plastoquinone. Couples the redox reaction to proton translocation, and thus conserves the redox energy in a proton gradient. This chain is NAD(P)H-quinone oxidoreductase subunit 3, chloroplastic, found in Angiopteris evecta (Mule's foot fern).